The following is a 57-amino-acid chain: UPF0391 membrane protein XOO1885 (57 aa).

2 consecutive transmembrane segments (helical) span residues 4–24 (WAIIFAIIGLIAGALGFGGMA) and 33–53 (FLFWAGIIIAIVLFVLGMTIA).

This sequence belongs to the UPF0391 family.

The protein localises to the cell membrane. This Xanthomonas oryzae pv. oryzae (strain KACC10331 / KXO85) protein is UPF0391 membrane protein XOO1885.